The primary structure comprises 322 residues: Probable F-box protein At1g60180 (322 aa).

One can recognise an F-box domain in the interval 45 to 88; that stretch reads FCELSDECIAKILSGCPILESLTLSHCIYLTVLDLSKSLRLRTL.

The sequence is that of Probable F-box protein At1g60180 from Arabidopsis thaliana (Mouse-ear cress).